Reading from the N-terminus, the 273-residue chain is Dermonecrotic toxin LhSicTox-alphaIA2bi (273 aa).

Glu25 and Asp27 together coordinate Mg(2+). The Nucleophile role is filled by His41. Intrachain disulfides connect Cys45/Cys51 and Cys47/Cys190. Residue Asp85 participates in Mg(2+) binding.

Belongs to the arthropod phospholipase D family. Class II subfamily. Mg(2+) serves as cofactor. Expressed by the venom gland.

It localises to the secreted. The catalysed reaction is an N-(acyl)-sphingosylphosphocholine = an N-(acyl)-sphingosyl-1,3-cyclic phosphate + choline. It catalyses the reaction an N-(acyl)-sphingosylphosphoethanolamine = an N-(acyl)-sphingosyl-1,3-cyclic phosphate + ethanolamine. It carries out the reaction a 1-acyl-sn-glycero-3-phosphocholine = a 1-acyl-sn-glycero-2,3-cyclic phosphate + choline. The enzyme catalyses a 1-acyl-sn-glycero-3-phosphoethanolamine = a 1-acyl-sn-glycero-2,3-cyclic phosphate + ethanolamine. Dermonecrotic toxins cleave the phosphodiester linkage between the phosphate and headgroup of certain phospholipids (sphingolipid and lysolipid substrates), forming an alcohol (often choline) and a cyclic phosphate. This toxin acts on sphingomyelin (SM). It may also act on ceramide phosphoethanolamine (CPE), lysophosphatidylcholine (LPC) and lysophosphatidylethanolamine (LPE), but not on lysophosphatidylserine (LPS), and lysophosphatidylglycerol (LPG). It acts by transphosphatidylation, releasing exclusively cyclic phosphate products as second products. Induces dermonecrosis, hemolysis, increased vascular permeability, edema, inflammatory response, and platelet aggregation. The sequence is that of Dermonecrotic toxin LhSicTox-alphaIA2bi from Loxosceles hirsuta (Recluse spider).